Reading from the N-terminus, the 174-residue chain is Ubiquitin-fold modifier-conjugating enzyme 1 (174 aa).

C119 (glycyl thioester intermediate) is an active-site residue.

This sequence belongs to the ubiquitin-conjugating enzyme family. UFC1 subfamily.

Functionally, E2-like enzyme which forms an intermediate with UFM1 via a thioester linkage. The polypeptide is Ubiquitin-fold modifier-conjugating enzyme 1 (Arabidopsis thaliana (Mouse-ear cress)).